We begin with the raw amino-acid sequence, 86 residues long: Exodeoxyribonuclease 7 small subunit (86 aa).

Residues 1-27 (MQDELFETEKIPPKNTKNAKNAPKKSF) form a disordered region.

Belongs to the XseB family. Heterooligomer composed of large and small subunits.

It localises to the cytoplasm. The catalysed reaction is Exonucleolytic cleavage in either 5'- to 3'- or 3'- to 5'-direction to yield nucleoside 5'-phosphates.. In terms of biological role, bidirectionally degrades single-stranded DNA into large acid-insoluble oligonucleotides, which are then degraded further into small acid-soluble oligonucleotides. The polypeptide is Exodeoxyribonuclease 7 small subunit (Helicobacter pylori (strain G27)).